The sequence spans 83 residues: Transmembrane protein EP84R (83 aa).

A run of 2 helical transmembrane segments spans residues 31-51 (IIGV…IIIL) and 59-79 (AGSI…FLIY).

Belongs to the asfivirus EP84R family.

It is found in the virion membrane. This Ornithodoros (relapsing fever ticks) protein is Transmembrane protein EP84R.